A 331-amino-acid chain; its full sequence is E3 ubiquitin-protein ligase Siah2 (331 aa).

The tract at residues 1 to 26 (MSRPSSAGGAAGGLGAGKAGGSKHGG) is disordered. Gly residues predominate over residues 9 to 26 (GAAGGLGAGKAGGSKHGG). The RING-type zinc finger occupies 89–124 (CPVCFDYVLPPILQCQAGHLVCNQCRQKLSCCPTCR). The SBD stretch occupies residues 139-331 (VASTLPFPCK…LGINVTISMC (193 aa)). The SIAH-type zinc-finger motif lies at 142 to 202 (TLPFPCKYSS…VMPHLMHAHK (61 aa)). The Zn(2+) site is built by Cys-147, Cys-154, His-166, Cys-170, Cys-177, Cys-184, His-196, and His-201.

It belongs to the SINA (Seven in absentia) family. Homodimer. In embryos it is expressed in all blastomeres starting at the mid-blastulla. After 20 somite stage, it is expressed mainly in the posterior part. Expressed in brain, including the eye, the cranial cavity, otic vesicle, optic chiasm and in the gut.

It catalyses the reaction S-ubiquitinyl-[E2 ubiquitin-conjugating enzyme]-L-cysteine + [acceptor protein]-L-lysine = [E2 ubiquitin-conjugating enzyme]-L-cysteine + N(6)-ubiquitinyl-[acceptor protein]-L-lysine.. It functions in the pathway protein modification; protein ubiquitination. In terms of biological role, E3 ubiquitin-protein ligase that mediates ubiquitination and subsequent proteasomal degradation of target proteins. E3 ubiquitin ligases accept ubiquitin from an E2 ubiquitin-conjugating enzyme in the form of a thioester and then directly transfers the ubiquitin to targeted substrates. It probably triggers the ubiquitin-mediated degradation of different substrates. Induces cellular growth arrest by inhibiting the G2/M transition. May play a role in the regulation of the cellular clock function. In Danio rerio (Zebrafish), this protein is E3 ubiquitin-protein ligase Siah2 (siah2l).